The chain runs to 328 residues: DNA polymerase IV (328 aa).

The region spanning 6 to 187 (IIHIDMDYFF…LDIGDFPGVG (182 aa)) is the UmuC domain. Asp10 and Asp105 together coordinate Mg(2+). Glu106 is an active-site residue.

The protein belongs to the DNA polymerase type-Y family. In terms of assembly, monomer. It depends on Mg(2+) as a cofactor.

It localises to the cytoplasm. It catalyses the reaction DNA(n) + a 2'-deoxyribonucleoside 5'-triphosphate = DNA(n+1) + diphosphate. Poorly processive, error-prone DNA polymerase involved in untargeted mutagenesis. Copies undamaged DNA at stalled replication forks, which arise in vivo from mismatched or misaligned primer ends. These misaligned primers can be extended by PolIV. Exhibits no 3'-5' exonuclease (proofreading) activity. May be involved in translesional synthesis, in conjunction with the beta clamp from PolIII. The polypeptide is DNA polymerase IV (Staphylococcus aureus (strain bovine RF122 / ET3-1)).